The chain runs to 1374 residues: Ribonuclease 3 (1374 aa).

Disordered stretches follow at residues 1-95 (MMQG…PLPP), 130-406 (PPVP…EEEE), and 452-497 (LGSR…SSSS). Residues 59–68 (PSTTFSNSPA) show a composition bias toward polar residues. Pro residues-rich tracts occupy residues 70–95 (NFLP…PLPP) and 145–160 (MMPP…PPVM). Low complexity predominate over residues 182–202 (FNSFQNNPSSFLPSANNSSSP). Basic and acidic residues-rich tracts occupy residues 216 to 289 (PSER…ERER) and 298 to 313 (RRSP…EYKR). 2 positions are modified to phosphoserine: Ser-355 and Ser-373. The span at 364–399 (RWEEEKDRWSDNQSSGKDKNYTSIKEKEPEETMPDK) shows a compositional bias: basic and acidic residues. Residues 390-1365 (KEPEETMPDK…RWEREHQERE (976 aa)) form a necessary for interaction with DGCR8 and pri-miRNA processing activity region. The span at 475 to 491 (EDLESSSESECESDEDS) shows a compositional bias: acidic residues. Positions 536, 538, 549, 561, 609, 676, and 680 each coordinate Zn(2+). RNase III domains are found at residues 876 to 1056 (LMHL…LEGS) and 1107 to 1233 (LTEF…IDKD). Glu-969 provides a ligand contact to Mg(2+). His-1026 provides a ligand contact to Zn(2+). 5 residues coordinate Mg(2+): Asn-1042, Glu-1045, Glu-1147, Asp-1219, and Glu-1222. Residues 1260-1334 (DPKSQLQQCC…AMDALEKYNF (75 aa)) form the DRBM domain.

The protein belongs to the ribonuclease III family. Component of the microprocessor complex, or pri-miRNA processing protein complex, which is composed of DROSHA and DGCR8. The microprocessor complex is a heterotrimer; each of the two DROSHA RNase III domains binds one DGCR8 (via C-terminal region). Interacts with SP1 and SNIP1. Interacts with SRRT/ARS2. Interacts with CPSF3 and ISY1; this interaction is in an RNA dependent manner. Interacts with PUS10; interaction promotes pri-miRNAs processing. Requires Mg(2+) as cofactor. Mn(2+) is required as a cofactor. Degraded by autophagy in response to neuronal activity in motor neurons. As to expression, ubiquitous.

It localises to the nucleus. The protein localises to the nucleolus. The protein resides in the cytoplasm. The catalysed reaction is Endonucleolytic cleavage to 5'-phosphomonoester.. Its function is as follows. Ribonuclease III double-stranded (ds) RNA-specific endoribonuclease that is involved in the initial step of microRNA (miRNA) biogenesis. Component of the microprocessor complex that is required to process primary miRNA transcripts (pri-miRNAs) to release precursor miRNA (pre-miRNA) in the nucleus. Within the microprocessor complex, DROSHA cleaves the 3' and 5' strands of a stem-loop in pri-miRNAs (processing center 11 bp from the dsRNA-ssRNA junction) to release hairpin-shaped pre-miRNAs that are subsequently cut by the cytoplasmic DICER to generate mature miRNAs. Involved also in pre-rRNA processing. Cleaves double-strand RNA and does not cleave single-strand RNA. Involved in the formation of GW bodies. Plays a role in growth homeostasis in response to autophagy in motor neurons. The sequence is that of Ribonuclease 3 (DROSHA) from Homo sapiens (Human).